We begin with the raw amino-acid sequence, 115 residues long: Dolichyl-diphosphooligosaccharide--protein glycosyltransferase subunit DAD1 (115 aa).

The Cytoplasmic segment spans residues 1–31 (MARSTGKDAQALFHSLRSAYAATPTTLKIID). Residues 32 to 52 (LYVGFAVFTALIQVVYMAIVG) form a helical membrane-spanning segment. Topologically, residues 53 to 55 (SFP) are lumenal. The helical transmembrane segment at 56–76 (FNSFLSGVLSCVGTAVLAVCL) threads the bilayer. Topologically, residues 77-94 (RIQVNKDNKEFKDLPPER) are cytoplasmic. Residues 95–115 (AFADFVLCNLVLHLVIMNFLG) traverse the membrane as a helical segment.

The protein belongs to the DAD/OST2 family. As to quaternary structure, component of the oligosaccharyltransferase (OST) complex.

It localises to the endoplasmic reticulum membrane. The protein operates within protein modification; protein glycosylation. Subunit of the oligosaccharyl transferase (OST) complex that catalyzes the initial transfer of a defined glycan (Glc(3)Man(9)GlcNAc(2) in eukaryotes) from the lipid carrier dolichol-pyrophosphate to an asparagine residue within an Asn-X-Ser/Thr consensus motif in nascent polypeptide chains, the first step in protein N-glycosylation. N-glycosylation occurs cotranslationally and the complex associates with the Sec61 complex at the channel-forming translocon complex that mediates protein translocation across the endoplasmic reticulum (ER). All subunits are required for a maximal enzyme activity. This is Dolichyl-diphosphooligosaccharide--protein glycosyltransferase subunit DAD1 (DAD1) from Citrus unshiu (Satsuma mandarin).